The sequence spans 92 residues: C-C motif chemokine 3 (92 aa).

The signal sequence occupies residues 1–26 (MQVSTAALAVLLCTVALCNRISATFA). 2 cysteine pairs are disulfide-bonded: Cys-33/Cys-57 and Cys-34/Cys-73.

This sequence belongs to the intercrine beta (chemokine CC) family. In terms of assembly, self-associates. Also heterodimer of MIP-1-alpha(4-69) and MIP-1-beta(3-69). Interacts with CCR1.

Its subcellular location is the secreted. Monokine with inflammatory and chemokinetic properties. Binds to CCR1, CCR4 and CCR5. One of the major HIV-suppressive factors produced by CD8+ T-cells. Recombinant MIP-1-alpha induces a dose-dependent inhibition of different strains of HIV-1, HIV-2, and simian immunodeficiency virus (SIV). In Macaca mulatta (Rhesus macaque), this protein is C-C motif chemokine 3 (CCL3).